The following is a 347-amino-acid chain: KRR1 small subunit processome component homolog (347 aa).

Positions 124–194 (GCDIIKIGNL…VRDIVLETMN (71 aa)) constitute a KH domain. The span at 231–246 (NKNLSKRKQPKVKKPK) shows a compositional bias: basic residues. Positions 231-347 (NKNLSKRKQP…LLKANKKSKS (117 aa)) are disordered. Positions 271-304 (FLNKEQKQAKRQQERQTKQAEAAKKQDERRNKDF) form a coiled coil. Composition is skewed to basic and acidic residues over residues 272 to 303 (LNKE…RNKD) and 318 to 329 (KANDNDSSDSRV). A compositionally biased stretch (basic residues) spans 337-347 (KLLKANKKSKS).

The protein belongs to the KRR1 family. Monomer. Component of the ribosomal small subunit (SSU) processome.

It localises to the nucleus. It is found in the nucleolus. Required for 40S ribosome biogenesis. Involved in nucleolar processing of pre-18S ribosomal RNA and ribosome assembly. Binds to RNA. Required for female germline development, cell viability during eye development and for survival of dividing cells and epithelial cells during early wing disk development. The sequence is that of KRR1 small subunit processome component homolog from Drosophila willistoni (Fruit fly).